Consider the following 180-residue polypeptide: Stathmin-3 (180 aa).

An SLD domain is found at 38–180 (GDMEVKQLDK…NKEQREEISG (143 aa)). The segment covering 60 to 74 (SPSDLSPESPILSSP) has biased composition (low complexity). Residues 60–82 (SPSDLSPESPILSSPPKKKDLSL) form a disordered region. Positions 75 to 179 (PKKKDLSLEE…RNKEQREEIS (105 aa)) form a coiled coil.

Belongs to the stathmin family.

This Gallus gallus (Chicken) protein is Stathmin-3 (STMN3).